A 495-amino-acid polypeptide reads, in one-letter code: ATP synthase subunit beta, chloroplastic (495 aa).

172-179 (GGAGVGKT) contacts ATP.

This sequence belongs to the ATPase alpha/beta chains family. In terms of assembly, F-type ATPases have 2 components, CF(1) - the catalytic core - and CF(0) - the membrane proton channel. CF(1) has five subunits: alpha(3), beta(3), gamma(1), delta(1), epsilon(1). CF(0) has four main subunits: a(1), b(1), b'(1) and c(9-12).

Its subcellular location is the plastid. The protein resides in the chloroplast thylakoid membrane. It carries out the reaction ATP + H2O + 4 H(+)(in) = ADP + phosphate + 5 H(+)(out). Produces ATP from ADP in the presence of a proton gradient across the membrane. The catalytic sites are hosted primarily by the beta subunits. In Hyacinthoides non-scripta (English bluebell), this protein is ATP synthase subunit beta, chloroplastic.